We begin with the raw amino-acid sequence, 537 residues long: Membrane protein insertase YidC (537 aa).

Helical transmembrane passes span 5 to 25 (LIIA…IFPT), 353 to 373 (GNYG…FFPL), 418 to 438 (VNPL…FGLY), and 495 to 515 (MLML…GLVI).

This sequence belongs to the OXA1/ALB3/YidC family. Type 1 subfamily. As to quaternary structure, interacts with the Sec translocase complex via SecD. Specifically interacts with transmembrane segments of nascent integral membrane proteins during membrane integration.

It is found in the cell inner membrane. Required for the insertion and/or proper folding and/or complex formation of integral membrane proteins into the membrane. Involved in integration of membrane proteins that insert both dependently and independently of the Sec translocase complex, as well as at least some lipoproteins. Aids folding of multispanning membrane proteins. This chain is Membrane protein insertase YidC, found in Citrifermentans bemidjiense (strain ATCC BAA-1014 / DSM 16622 / JCM 12645 / Bem) (Geobacter bemidjiensis).